Reading from the N-terminus, the 89-residue chain is Small ribosomal subunit protein bS18 (89 aa).

It belongs to the bacterial ribosomal protein bS18 family. Part of the 30S ribosomal subunit. Forms a tight heterodimer with protein bS6.

Its function is as follows. Binds as a heterodimer with protein bS6 to the central domain of the 16S rRNA, where it helps stabilize the platform of the 30S subunit. This Bdellovibrio bacteriovorus (strain ATCC 15356 / DSM 50701 / NCIMB 9529 / HD100) protein is Small ribosomal subunit protein bS18.